A 131-amino-acid polypeptide reads, in one-letter code: Torsin-1A-interacting protein 2, isoform IFRG15 (131 aa).

In Mus musculus (Mouse), this protein is Torsin-1A-interacting protein 2, isoform IFRG15 (Tor1aip2).